We begin with the raw amino-acid sequence, 338 residues long: Putative acyl-[acyl-carrier-protein] desaturase DesA1 (338 aa).

The Fe cation site is built by E76, E107, H110, E167, E197, and H200. Over residues 314–328 (EARTGKKVSAHELHK) the composition is skewed to basic and acidic residues. Residues 314-338 (EARTGKKVSAHELHKTAGKLAMSRR) form a disordered region.

It belongs to the fatty acid desaturase type 2 family. In terms of assembly, homodimer. Fe(2+) is required as a cofactor.

The protein localises to the cell surface. It functions in the pathway lipid metabolism; fatty acid metabolism. In terms of biological role, may be a desaturase involved in mycobacterial fatty acid biosynthesis. The protein is Putative acyl-[acyl-carrier-protein] desaturase DesA1 (desA1) of Mycobacterium tuberculosis (strain CDC 1551 / Oshkosh).